The following is a 105-amino-acid chain: Large ribosomal subunit protein uL24 (105 aa).

Belongs to the universal ribosomal protein uL24 family. Part of the 50S ribosomal subunit.

Functionally, one of two assembly initiator proteins, it binds directly to the 5'-end of the 23S rRNA, where it nucleates assembly of the 50S subunit. One of the proteins that surrounds the polypeptide exit tunnel on the outside of the subunit. The protein is Large ribosomal subunit protein uL24 of Beijerinckia indica subsp. indica (strain ATCC 9039 / DSM 1715 / NCIMB 8712).